The chain runs to 877 residues: DNA mismatch repair protein MutS (877 aa).

An ATP-binding site is contributed by 630 to 637 (GPNMAGKS).

The protein belongs to the DNA mismatch repair MutS family.

Functionally, this protein is involved in the repair of mismatches in DNA. It is possible that it carries out the mismatch recognition step. This protein has a weak ATPase activity. This Ruegeria pomeroyi (strain ATCC 700808 / DSM 15171 / DSS-3) (Silicibacter pomeroyi) protein is DNA mismatch repair protein MutS.